The following is a 257-amino-acid chain: Nickel import system ATP-binding protein NikD (257 aa).

The ABC transporter domain maps to 4-245 (IDIQNLTIKN…HLHPYTERLI (242 aa)). Residue 37–44 (GESGAGKS) participates in ATP binding.

It belongs to the ABC transporter superfamily. As to quaternary structure, the complex is composed of two ATP-binding proteins (NikD and NikE), two transmembrane proteins (NikB and NikC) and a solute-binding protein (NikA).

Its subcellular location is the cell membrane. It catalyses the reaction Ni(2+)(out) + ATP + H2O = Ni(2+)(in) + ADP + phosphate + H(+). Functionally, part of the ABC transporter complex NikABCDE (Opp2) involved in nickel import. Probably responsible for energy coupling to the transport system. The protein is Nickel import system ATP-binding protein NikD of Staphylococcus aureus (strain MRSA252).